The following is a 327-amino-acid chain: Tagatose 1,6-diphosphate aldolase 2 (327 aa).

It belongs to the aldolase LacD family.

It carries out the reaction D-tagatofuranose 1,6-bisphosphate = D-glyceraldehyde 3-phosphate + dihydroxyacetone phosphate. Its pathway is carbohydrate metabolism; D-tagatose 6-phosphate degradation; D-glyceraldehyde 3-phosphate and glycerone phosphate from D-tagatose 6-phosphate: step 2/2. The sequence is that of Tagatose 1,6-diphosphate aldolase 2 (lacD2) from Streptococcus pyogenes serotype M3 (strain ATCC BAA-595 / MGAS315).